The sequence spans 416 residues: Adipocyte plasma membrane-associated protein (416 aa).

The Cytoplasmic segment spans residues 1–39 (MNEPEGLRFRRLNRPQIITDELQEPQYKGTSTYSGKVFR). Residues 40–60 (VILVTLGGCLILPLLVVFFLL) form a helical membrane-spanning segment. At 61–412 (ESPIHPELLS…FRSPYLCKLD (352 aa)) the chain is on the extracellular side. Residue N160 is glycosylated (N-linked (GlcNAc...) asparagine).

This sequence belongs to the strictosidine synthase family.

It is found in the membrane. This is Adipocyte plasma membrane-associated protein (apmap) from Salmo salar (Atlantic salmon).